A 440-amino-acid chain; its full sequence is Xaa-Pro dipeptidase (440 aa).

Positions 244, 255, 335, 380, and 419 each coordinate Mn(2+).

This sequence belongs to the peptidase M24B family. Bacterial-type prolidase subfamily. The cofactor is Mn(2+).

The enzyme catalyses Xaa-L-Pro dipeptide + H2O = an L-alpha-amino acid + L-proline. In terms of biological role, splits dipeptides with a prolyl residue in the C-terminal position. This is Xaa-Pro dipeptidase from Shewanella piezotolerans (strain WP3 / JCM 13877).